The following is a 266-amino-acid chain: Imidazole glycerol phosphate synthase subunit HisF (266 aa).

Active-site residues include aspartate 11 and aspartate 130.

It belongs to the HisA/HisF family. As to quaternary structure, heterodimer of HisH and HisF.

It localises to the cytoplasm. It carries out the reaction 5-[(5-phospho-1-deoxy-D-ribulos-1-ylimino)methylamino]-1-(5-phospho-beta-D-ribosyl)imidazole-4-carboxamide + L-glutamine = D-erythro-1-(imidazol-4-yl)glycerol 3-phosphate + 5-amino-1-(5-phospho-beta-D-ribosyl)imidazole-4-carboxamide + L-glutamate + H(+). The protein operates within amino-acid biosynthesis; L-histidine biosynthesis; L-histidine from 5-phospho-alpha-D-ribose 1-diphosphate: step 5/9. Its function is as follows. IGPS catalyzes the conversion of PRFAR and glutamine to IGP, AICAR and glutamate. The HisF subunit catalyzes the cyclization activity that produces IGP and AICAR from PRFAR using the ammonia provided by the HisH subunit. The polypeptide is Imidazole glycerol phosphate synthase subunit HisF (Nitrosopumilus maritimus (strain SCM1)).